Consider the following 441-residue polypeptide: GTPase Der (441 aa).

2 EngA-type G domains span residues 3 to 167 and 176 to 351; these read PLIA…PKGS and TKIA…EQFA. GTP is bound by residues 9–16, 56–60, 119–122, 182–189, 229–233, and 294–297; these read GRPNVGKS, DTGGF, NKID, DTAGI, and NKWD. The region spanning 352–436 is the KH-like domain; sequence RRITTSDLNR…PMRLLFKGRE (85 aa).

This sequence belongs to the TRAFAC class TrmE-Era-EngA-EngB-Septin-like GTPase superfamily. EngA (Der) GTPase family. In terms of assembly, associates with the 50S ribosomal subunit.

In terms of biological role, GTPase that plays an essential role in the late steps of ribosome biogenesis. This is GTPase Der from Geotalea uraniireducens (strain Rf4) (Geobacter uraniireducens).